The chain runs to 256 residues: Acetylglutamate kinase (256 aa).

Residues 40 to 41, Arg62, and Asn154 contribute to the substrate site; that span reads GG.

It belongs to the acetylglutamate kinase family. ArgB subfamily.

The protein localises to the cytoplasm. It catalyses the reaction N-acetyl-L-glutamate + ATP = N-acetyl-L-glutamyl 5-phosphate + ADP. It participates in amino-acid biosynthesis; L-arginine biosynthesis; N(2)-acetyl-L-ornithine from L-glutamate: step 2/4. Its function is as follows. Catalyzes the ATP-dependent phosphorylation of N-acetyl-L-glutamate. The protein is Acetylglutamate kinase of Staphylococcus aureus (strain MRSA252).